The primary structure comprises 201 residues: Ras-related protein Rab-9B (201 aa).

GTP-binding residues include V18, G19, K20, S21, S22, D33, S34, A36, H38, and T39. S21 lines the Mg(2+) pocket. A Switch 1 motif is present at residues 31–42 (KFDSQAFHTIGV). Residue S34 is modified to Phosphoserine. 2 residues coordinate Mg(2+): T39 and D62. Positions 64 to 78 (AGQERFKSLRTPFYR) match the Switch 2 motif. Residues G65, N124, K125, A155, and K156 each contribute to the GTP site. 2 S-geranylgeranyl cysteine lipidation sites follow: C200 and C201.

The protein belongs to the small GTPase superfamily. Rab family. In terms of assembly, interacts (GTP-bound form) with SGSM1; the GDP-bound form has much lower affinity for SGSM1. The GTP-bound form but not the GDP-bound form interacts with HPS4 and the BLOC-3 complex (heterodimer of HPS1 and HPS4) but does not interact with HPS1 alone. Interacts (GTP-bound form) with NDE1. Mg(2+) is required as a cofactor.

It localises to the cell membrane. The protein resides in the cytoplasmic vesicle. The protein localises to the phagosome membrane. The catalysed reaction is GTP + H2O = GDP + phosphate + H(+). Its activity is regulated as follows. Regulated by guanine nucleotide exchange factors (GEFs) which promote the exchange of bound GDP for free GTP. Regulated by GTPase activating proteins (GAPs) which increase the GTP hydrolysis activity. Inhibited by GDP dissociation inhibitors (GDIs). Functionally, the small GTPases Rab are key regulators of intracellular membrane trafficking, from the formation of transport vesicles to their fusion with membranes. Rabs cycle between an inactive GDP-bound form and an active GTP-bound form that is able to recruit to membranes different sets of downstream effectors directly responsible for vesicle formation, movement, tethering and fusion. RAB9B is involved in the transport of proteins between the endosomes and the trans Golgi network. May use NDE1/NDEL1 as an effector to interact with the dynein motor complex in order to control retrograde trafficking of RAB9-associated late endosomes to the TGN. The sequence is that of Ras-related protein Rab-9B from Mus musculus (Mouse).